Reading from the N-terminus, the 191-residue chain is MDSKPYRYISKAINLDLYNELVSEIKPKRELMTVTYSDAKIPERRETAWQTETDISAEYSGKTMDPVPFTPTVHMLKKKIEEIIGVEFDSALIFHYIDGKDSMGYHYDTIGVGRGNHIAGVTFGSSRCLGVRNNETNEKEFFNLGNGDIFYMFDDCQKKYKHAILESKEENPGPRIAITFRQMGPNLSQKN.

The region spanning 87–184 is the Fe2OG dioxygenase domain; that stretch reads EFDSALIFHY…RIAITFRQMG (98 aa).

This is an uncharacterized protein from Acanthamoeba polyphaga mimivirus (APMV).